A 279-amino-acid polypeptide reads, in one-letter code: Stathmin domain-containing protein 1 (279 aa).

Disordered regions lie at residues 1–110 (MGCG…ERPK) and 178–254 (AAEE…VAQM). A lipid anchor (N-myristoyl glycine) is attached at Gly2. Residues 22–32 (KGWEEGSKADV) are compositionally biased toward basic and acidic residues. Polar residues predominate over residues 34 to 45 (VTSSKENCSPQT). One can recognise an SLD domain in the interval 121–248 (QGIIQSRSKV…GEPLKRKKSE (128 aa)). 2 stretches are compositionally biased toward basic and acidic residues: residues 178–191 (AAEE…EEIR) and 232–242 (EKSDVQEGEPL).

This chain is Stathmin domain-containing protein 1 (Stmnd1), found in Mus musculus (Mouse).